A 307-amino-acid polypeptide reads, in one-letter code: Porphobilinogen deaminase (307 aa).

An S-(dipyrrolylmethanemethyl)cysteine modification is found at Cys-239.

Belongs to the HMBS family. In terms of assembly, monomer. Requires dipyrromethane as cofactor.

The enzyme catalyses 4 porphobilinogen + H2O = hydroxymethylbilane + 4 NH4(+). It functions in the pathway porphyrin-containing compound metabolism; protoporphyrin-IX biosynthesis; coproporphyrinogen-III from 5-aminolevulinate: step 2/4. Its function is as follows. Tetrapolymerization of the monopyrrole PBG into the hydroxymethylbilane pre-uroporphyrinogen in several discrete steps. The chain is Porphobilinogen deaminase from Campylobacter jejuni subsp. doylei (strain ATCC BAA-1458 / RM4099 / 269.97).